The primary structure comprises 228 residues: MASAKSGERGSSSFAMACSLLSRYVRQNGAAAGELGLGIRGEADANKGKETMELFPQNSGFGSEAAAVKETPDAREQEKRQLTIFYGGKVLVFDDFPAEKAKDLMQMASKSSSTAQNCVLLPSSATATVADNTKVSAVPAPASALPVAQANAPKPVRPNAADLPQARKASLHRFLEKRKDRLQAKAPYQGSPSDASPVKKELQESQPWLGLGPQVAAPDLSLRQESSQ.

Residues 75–110 (REQEKRQLTIFYGGKVLVFDDFPAEKAKDLMQMASK) form the Tify domain. Residues 164–189 (PQARKASLHRFLEKRKDRLQAKAPYQ) carry the Jas motif. A Nuclear localization signal motif is present at residues 166–173 (ARKASLHR). Residues 175–228 (LEKRKDRLQAKAPYQGSPSDASPVKKELQESQPWLGLGPQVAAPDLSLRQESSQ) form a disordered region.

This sequence belongs to the TIFY/JAZ family. As to quaternary structure, interacts with COI1A and COI1B in a coronatine-dependent manner. Coronatine is an analog of jasmonoyl isoleucine (JA-Ile). Ubiquitinated. Targeted for degradation by the SCF(COI1) E3 ubiquitin ligase-proteasome pathway during jasmonate signaling.

It localises to the nucleus. Functionally, repressor of jasmonate responses. The protein is Protein TIFY 10a of Oryza sativa subsp. japonica (Rice).